The chain runs to 291 residues: Pantothenate synthetase (291 aa).

33 to 40 contacts ATP; sequence MGALHEGH. His-40 serves as the catalytic Proton donor. Gln-64 serves as a coordination point for (R)-pantoate. Gln-64 provides a ligand contact to beta-alanine. 157-160 contacts ATP; the sequence is GEKD. (R)-pantoate is bound at residue Gln-163. ATP-binding positions include Val-186 and 194–197; that span reads LSSR.

It belongs to the pantothenate synthetase family. In terms of assembly, homodimer.

It is found in the cytoplasm. It carries out the reaction (R)-pantoate + beta-alanine + ATP = (R)-pantothenate + AMP + diphosphate + H(+). It functions in the pathway cofactor biosynthesis; (R)-pantothenate biosynthesis; (R)-pantothenate from (R)-pantoate and beta-alanine: step 1/1. Its function is as follows. Catalyzes the condensation of pantoate with beta-alanine in an ATP-dependent reaction via a pantoyl-adenylate intermediate. This is Pantothenate synthetase from Rubrobacter xylanophilus (strain DSM 9941 / JCM 11954 / NBRC 16129 / PRD-1).